Here is an 809-residue protein sequence, read N- to C-terminus: Lon protease (809 aa).

Residues leucine 42–leucine 242 form the Lon N-terminal domain. Glycine 395–threonine 402 is an ATP binding site. Residues leucine 629–glycine 809 enclose the Lon proteolytic domain. Catalysis depends on residues serine 716 and lysine 759.

Belongs to the peptidase S16 family. In terms of assembly, homohexamer. Organized in a ring with a central cavity.

It is found in the cytoplasm. The enzyme catalyses Hydrolysis of proteins in presence of ATP.. ATP-dependent serine protease that mediates the selective degradation of mutant and abnormal proteins as well as certain short-lived regulatory proteins. Required for cellular homeostasis and for survival from DNA damage and developmental changes induced by stress. Degrades polypeptides processively to yield small peptide fragments that are 5 to 10 amino acids long. Binds to DNA in a double-stranded, site-specific manner. This chain is Lon protease, found in Magnetococcus marinus (strain ATCC BAA-1437 / JCM 17883 / MC-1).